Here is a 96-residue protein sequence, read N- to C-terminus: Putative pterin-4-alpha-carbinolamine dehydratase (96 aa).

Belongs to the pterin-4-alpha-carbinolamine dehydratase family.

It carries out the reaction (4aS,6R)-4a-hydroxy-L-erythro-5,6,7,8-tetrahydrobiopterin = (6R)-L-erythro-6,7-dihydrobiopterin + H2O. The polypeptide is Putative pterin-4-alpha-carbinolamine dehydratase (Novosphingobium aromaticivorans (strain ATCC 700278 / DSM 12444 / CCUG 56034 / CIP 105152 / NBRC 16084 / F199)).